Consider the following 52-residue polypeptide: Eukaryotic translation initiation factor 2 subunit 1 (52 aa).

The S1 motif domain maps to 16–52 (EDVVMVNVRSIAEMGAYVSLLEYNNIEGRILLSELSR). Residue Ser-48 is modified to Phosphoserine; by HRI. Residue Ser-51 is modified to Phosphoserine.

The protein belongs to the eIF-2-alpha family. Eukaryotic translation initiation factor 2 eIF2 is a heterotrimeric complex composed of an alpha (EIF2S1), a beta (EIF2S2) and a gamma (EIF2S3) chain. eIF2 is member of the 43S pre-initiation complex (43S PIC). eIF2 forms a complex with at least CELF1/CUGBP1, CALR, CALR3, EIF2S1, EIF2S2, HSP90B1 and HSPA5. Interaction with METAP2 protects EIF2S1 from inhibitory phosphorylation. Interacts with ABCF1. Associates with ribosomes. Interacts with DDX3X in an RNA-independent manner. In terms of processing, phosphorylation at Ser-48 and Ser-51 stabilizes the eIF-2/GDP/eIF2B complex and prevents GDP/GTP exchange reaction, thus impairing the recycling of eIF-2 between successive rounds of initiation and leading to global inhibition of translation, while concomitantly initiating the preferential translation of integrated stress response (ISR)-specific mRNAs. Substrate for at least 4 kinases: EIF2AK1/HRI, EIF2AK2/PKR, EIF2AK3/PERK and EIF2AK4/GCN2. Phosphorylation on Ser-51 by the EIF2AK4/GCN2 protein kinase occurs in response to amino acid starvation and UV irradiation. Phosphorylation at Ser-51 by the EIF2AK3/PERK protein kinase occurs in response to the unfolded protein response. Phosphorylation at Ser-51 by EIF2AK1/HRI in response to mitochondrial damage promotes relocalization to the mitochondrial surface.

It is found in the cytoplasm. The protein localises to the stress granule. Its subcellular location is the cytosol. The protein resides in the mitochondrion. With respect to regulation, activity is regulated by phosphorylation at Ser-49 and Ser-52, which stabilizes the eIF2/GDP/eIF2B complex and prevents the eIF2B-mediated exchange of GDP for GTP, thereby preventing the formation of the 43S pre-initiation complex (43S PIC). This results in the global attenuation of 5' cap-dependent protein synthesis and concomitant translation of ISR-specific mRNAs that contain a short upstream open reading frame (uORF) in their 5' UTR, such as ATF4, ATF5, DDIT3/CHOP and PPP1R15A/GADD34. Its function is as follows. Member of the eIF2 complex that functions in the early steps of protein synthesis by forming a ternary complex with GTP and initiator tRNA. This complex binds to a 40S ribosomal subunit, followed by mRNA binding to form a 43S pre-initiation complex. Junction of the 60S ribosomal subunit to form the 80S initiation complex is preceded by hydrolysis of the GTP bound to eIF2 and release of an eIF2-GDP binary complex. In order for eIF2 to recycle and catalyze another round of initiation, the GDP bound to eIF2 must exchange with GTP by way of a reaction catalyzed by eIF2B. EIF2S1/eIF2-alpha is a key component of the integrated stress response (ISR), required for adaptation to various stress: phosphorylation by metabolic-stress sensing protein kinases (EIF2AK1/HRI, EIF2AK2/PKR, EIF2AK3/PERK and EIF2AK4/GCN2) in response to stress converts EIF2S1/eIF2-alpha in a global protein synthesis inhibitor, leading to a attenuation of cap-dependent translation, while concomitantly initiating the preferential translation of ISR-specific mRNAs, such as the transcriptional activators ATF4 and QRICH1, and hence allowing ATF4- and QRICH1-mediated reprogramming. EIF2S1/eIF2-alpha also acts as an activator of mitophagy in response to mitochondrial damage: phosphorylation by EIF2AK1/HRI promotes relocalization to the mitochondrial surface, thereby triggering PRKN-independent mitophagy. This chain is Eukaryotic translation initiation factor 2 subunit 1 (EIF2S1), found in Oryctolagus cuniculus (Rabbit).